We begin with the raw amino-acid sequence, 416 residues long: MRVACRRPHHLTYRHTAYTIIIFYILHRVTCNSTTTNTASITSPNTASTTFVTSVFSTPNNNTSTTPHTSVTSQASTIGNITNVTSDLSTFTTVYSTFNTSYANISNTAATTELISTNTNTILSFTNVTANATSSYNTTITVTITSDETSHNVSTNTALISTPWLTNCSATTYTTYNRTNSSNACHTETTIIRFKETNTTGIEGSNVTIKGNSTWDCLSVAWIRHYNRSTHGHHLGHRKNAHTQSWYWLRILTSHTVCHSQHERPSLYHDLCRSCNNTELHLYDLNITNSGRYSRRCFKENYFTGHHEDENFYLLVTPKNHTEAINATFVCPRYNTDIENEDREKGSQHTNNTHHHKRNLYHSSQRSRTVWTIVLVCMACIVLFFARRAFNKKYHMLQDTVSESEFIVRYHTEHED.

The interval 341–360 (EDREKGSQHTNNTHHHKRNL) is disordered.

This is an uncharacterized protein from Human cytomegalovirus (strain AD169) (HHV-5).